Consider the following 376-residue polypeptide: MEEFNSSGSVVNGTGSTEVPQSNAEVIRGQIFEVGPRYIKLAYIGEGAYGMVVSADDTLTNQRVAIKKISPFEHQTYCQRTLREITILTRFKHENIIDIRDILRVDSIDQMRDVYIVQCLMETDLYKLLKTQRLSNDHICYFLYQILRGLKYIHSANVLHRDLKPSNLLLNKTCDLKICDFGLARIADPEHDHTGFLTEYVATRWYRAPEIMLNSKGYTKSIDIWSVGCILAEMLSNRPIFPGKHYLDQLNHILGVLGSPSRDDLECIINEKARNYLESLPFKPNVPWAKLFPNADALALDLLGKMLTFNPHKRIPVEEALAHPYLEQYYDPGDEPVAEVPFRINMENDDISRDALKSLIFEETLKFKERQPDNAP.

A Protein kinase domain is found at 38–326 (YIKLAYIGEG…VEEALAHPYL (289 aa)). Residues 44–52 (IGEGAYGMV) and Lys67 each bind ATP. Catalysis depends on Asp162, which acts as the Proton acceptor. Thr198 carries the phosphothreonine modification. The TXY signature appears at 198–200 (TEY). Tyr200 is subject to Phosphotyrosine.

The protein belongs to the protein kinase superfamily. CMGC Ser/Thr protein kinase family. MAP kinase subfamily. Mg(2+) serves as cofactor. Dually phosphorylated on Thr-198 and Tyr-200, which activates the enzyme. Phosphorylated on tyrosine residue(s) in response to insulin. In third instar larvae, expressed in eye imaginal disks. In adults, expressed in head and body.

Its subcellular location is the cytoplasm. It localises to the nucleus. The enzyme catalyses L-seryl-[protein] + ATP = O-phospho-L-seryl-[protein] + ADP + H(+). It catalyses the reaction L-threonyl-[protein] + ATP = O-phospho-L-threonyl-[protein] + ADP + H(+). With respect to regulation, activated by tyrosine and threonine phosphorylation. Its function is as follows. Serine/threonine kinase which acts as an essential component of the MAP kinase signal transduction pathway to regulate proliferation, differentiation and effect cell fate decisions in various tissues. Required downstream of phl/Raf in the sev/sevenless, tor/torso, and EGF receptor homolog Egfr signal transduction pathways. Required for embryonic epithelial tissue repair. During larval development, mediates Ptth/tor signaling leading to the production of ecdysone, a hormone required for the initiation of metamorphosis. This is Mitogen-activated protein kinase ERK-A from Drosophila melanogaster (Fruit fly).